The primary structure comprises 271 residues: Probable esterase D14L (271 aa).

Catalysis depends on serine 96, which acts as the Nucleophile. Residues aspartate 218 and histidine 247 contribute to the active site.

It belongs to the AB hydrolase superfamily. Component of an intracellular receptor complex involved in the detection of the smoke compound karrikin. In terms of tissue distribution, expressed constitutively in all organs (e.g. roots, stems, leaves, panicles and embryos).

The protein localises to the nucleus. The protein resides in the cytoplasm. In terms of biological role, may be involved in strigolactone signaling pathway. Essential for plant responses to karrikins, a class of butenolide compounds, structurally similar to strigolactones, released from burning vegetation that stimulate seed germination and enhance seedling photomorphogenesis. Mediates a specific perception of karrikin. Required for the establishment of symbiosis with the arbuscular mycorrhizal fungi (AMF) Rhizophagus irregularis and Gigaspora rosea. Karrikin binding induces a conformational change. The sequence is that of Probable esterase D14L (D14L) from Oryza sativa subsp. japonica (Rice).